Reading from the N-terminus, the 260-residue chain is Acetylglutamate kinase (260 aa).

Residues 46-47 (GG), Arg68, and Asn160 contribute to the substrate site.

It belongs to the acetylglutamate kinase family. ArgB subfamily.

It is found in the cytoplasm. The catalysed reaction is N-acetyl-L-glutamate + ATP = N-acetyl-L-glutamyl 5-phosphate + ADP. It functions in the pathway amino-acid biosynthesis; L-arginine biosynthesis; N(2)-acetyl-L-ornithine from L-glutamate: step 2/4. Catalyzes the ATP-dependent phosphorylation of N-acetyl-L-glutamate. This Shewanella sp. (strain W3-18-1) protein is Acetylglutamate kinase.